The following is a 216-amino-acid chain: Ribonuclease HII (216 aa).

One can recognise an RNase H type-2 domain in the interval Asp-28–Arg-216. 3 residues coordinate a divalent metal cation: Asp-34, Glu-35, and Asp-126.

The protein belongs to the RNase HII family. Mn(2+) is required as a cofactor. Requires Mg(2+) as cofactor.

It localises to the cytoplasm. The enzyme catalyses Endonucleolytic cleavage to 5'-phosphomonoester.. Functionally, endonuclease that specifically degrades the RNA of RNA-DNA hybrids. This chain is Ribonuclease HII, found in Burkholderia vietnamiensis (strain G4 / LMG 22486) (Burkholderia cepacia (strain R1808)).